Consider the following 207-residue polypeptide: High frequency lysogenization protein HflD homolog (207 aa).

The protein belongs to the HflD family.

The protein localises to the cytoplasm. It is found in the cell inner membrane. This Teredinibacter turnerae (strain ATCC 39867 / T7901) protein is High frequency lysogenization protein HflD homolog.